The sequence spans 299 residues: Oxygen-dependent coproporphyrinogen-III oxidase (299 aa).

Ser-92 contributes to the substrate binding site. A divalent metal cation contacts are provided by His-96 and His-106. His-106 serves as the catalytic Proton donor. Residue 108–110 (NVR) participates in substrate binding. 2 residues coordinate a divalent metal cation: His-145 and His-175. The interval 240 to 275 (YVEFNLVWDRGTLFGLQTGGRTESILMSMPPLVRWE) is important for dimerization. 258–260 (GGR) is a substrate binding site.

Belongs to the aerobic coproporphyrinogen-III oxidase family. Homodimer. A divalent metal cation serves as cofactor.

It localises to the cytoplasm. It carries out the reaction coproporphyrinogen III + O2 + 2 H(+) = protoporphyrinogen IX + 2 CO2 + 2 H2O. Its pathway is porphyrin-containing compound metabolism; protoporphyrin-IX biosynthesis; protoporphyrinogen-IX from coproporphyrinogen-III (O2 route): step 1/1. Its function is as follows. Involved in the heme biosynthesis. Catalyzes the aerobic oxidative decarboxylation of propionate groups of rings A and B of coproporphyrinogen-III to yield the vinyl groups in protoporphyrinogen-IX. The chain is Oxygen-dependent coproporphyrinogen-III oxidase from Citrobacter koseri (strain ATCC BAA-895 / CDC 4225-83 / SGSC4696).